The primary structure comprises 209 residues: N-(5'-phosphoribosyl)anthranilate isomerase (209 aa).

The protein belongs to the TrpF family.

The catalysed reaction is N-(5-phospho-beta-D-ribosyl)anthranilate = 1-(2-carboxyphenylamino)-1-deoxy-D-ribulose 5-phosphate. Its pathway is amino-acid biosynthesis; L-tryptophan biosynthesis; L-tryptophan from chorismate: step 3/5. The chain is N-(5'-phosphoribosyl)anthranilate isomerase from Granulibacter bethesdensis (strain ATCC BAA-1260 / CGDNIH1).